The following is a 253-amino-acid chain: Major prion protein (253 aa).

The first 22 residues, 1-22, serve as a signal peptide directing secretion; the sequence is MANLGCWMLVLFVATWSNLGLC. An interaction with ADGRG6 region spans residues 23 to 38; sequence KKRPKPGGWNTGGSRY. The interval 23–230 is interaction with GRB2, ERI3 and SYN1; it reads KKRPKPGGWN…ESQAYYQRGS (208 aa). The tract at residues 25 to 108 is disordered; that stretch reads RPKPGGWNTG…WNKPSKPKTN (84 aa). 5 tandem repeats follow at residues 51 to 59, 60 to 67, 68 to 75, 76 to 83, and 84 to 91. The segment at 51–91 is 5 X 8 AA tandem repeats of P-H-G-G-G-W-G-Q; it reads PQGGGGWGQPHGGGWGQPHGGGWGQPHGGGWGQPHGGGWGQ. Over residues 52 to 95 the composition is skewed to gly residues; the sequence is QGGGGWGQPHGGGWGQPHGGGWGQPHGGGWGQPHGGGWGQGGGT. Cu(2+) contacts are provided by histidine 61, glycine 62, glycine 63, histidine 69, glycine 70, glycine 71, histidine 77, glycine 78, glycine 79, histidine 85, glycine 86, and glycine 87. The cysteines at positions 179 and 214 are disulfide-linked. N-linked (GlcNAc...) asparagine glycosylation is found at asparagine 181 and asparagine 197. A lipid anchor (GPI-anchor amidated serine) is attached at serine 230. A propeptide spans 231 to 253 (removed in mature form); that stretch reads SMVLFSSPPVILLISFLIFLIVG.

The protein belongs to the prion family. Monomer and homodimer. Has a tendency to aggregate into amyloid fibrils containing a cross-beta spine, formed by a steric zipper of superposed beta-strands. Soluble oligomers may represent an intermediate stage on the path to fibril formation. Copper binding may promote oligomerization. Interacts with GRB2, APP, ERI3/PRNPIP and SYN1. Mislocalized cytosolically exposed PrP interacts with MGRN1; this interaction alters MGRN1 subcellular location and causes lysosomal enlargement. Interacts with APP. Interacts with KIAA1191. Interacts with ADGRG6.

Its subcellular location is the cell membrane. The protein resides in the golgi apparatus. Its function is as follows. Its primary physiological function is unclear. May play a role in neuronal development and synaptic plasticity. May be required for neuronal myelin sheath maintenance. May promote myelin homeostasis through acting as an agonist for ADGRG6 receptor. May play a role in iron uptake and iron homeostasis. Soluble oligomers are toxic to cultured neuroblastoma cells and induce apoptosis (in vitro). Association with GPC1 (via its heparan sulfate chains) targets PRNP to lipid rafts. Also provides Cu(2+) or Zn(2+) for the ascorbate-mediated GPC1 deaminase degradation of its heparan sulfate side chains. In Pongo pygmaeus (Bornean orangutan), this protein is Major prion protein (PRNP).